The primary structure comprises 215 residues: MHSSYPTITGLGLVPTVIEQSGRGERAYDIYSRLLRERIVFLVGPVNEQSASVIVAQLLFLESENPDKDISFYINSPGGSVYDGLAIYDTMQFIKPEVSTLCTGFAASMGTFLLTAGQRGKRYALPNARIMIHQPSGGSQGTAADVEIQAKEVLYLRERLNAMMAERTGRSIEEIARDTDRDNFMSAHAAKTYGLVDEVLETRAALGASPHLHDR.

Serine 108 functions as the Nucleophile in the catalytic mechanism. The active site involves histidine 133.

It belongs to the peptidase S14 family. Fourteen ClpP subunits assemble into 2 heptameric rings which stack back to back to give a disk-like structure with a central cavity, resembling the structure of eukaryotic proteasomes.

It is found in the cytoplasm. It catalyses the reaction Hydrolysis of proteins to small peptides in the presence of ATP and magnesium. alpha-casein is the usual test substrate. In the absence of ATP, only oligopeptides shorter than five residues are hydrolyzed (such as succinyl-Leu-Tyr-|-NHMec, and Leu-Tyr-Leu-|-Tyr-Trp, in which cleavage of the -Tyr-|-Leu- and -Tyr-|-Trp bonds also occurs).. In terms of biological role, cleaves peptides in various proteins in a process that requires ATP hydrolysis. Has a chymotrypsin-like activity. Plays a major role in the degradation of misfolded proteins. This is ATP-dependent Clp protease proteolytic subunit 1 from Paraburkholderia xenovorans (strain LB400).